Here is a 157-residue protein sequence, read N- to C-terminus: uncharacterized protein (157 aa).

The 138-residue stretch at Leu-9–Thr-146 folds into the N-acetyltransferase domain.

This is an uncharacterized protein from Bacillus cereus (strain ZK / E33L).